We begin with the raw amino-acid sequence, 266 residues long: Signal peptidase I (266 aa).

Residues 1–20 lie on the Cytoplasmic side of the membrane; the sequence is MQTDNTKSNTNKTAKQEWGS. Residues 21 to 41 traverse the membrane as a helical segment; it reads FAFVICIALLIRILIMEPFNV. The Extracellular segment spans residues 42 to 266; it reads PTGSMKATIL…IFRNLYNTDA (225 aa). Catalysis depends on residues S45 and K108.

Belongs to the peptidase S26 family.

It is found in the cell membrane. The catalysed reaction is Cleavage of hydrophobic, N-terminal signal or leader sequences from secreted and periplasmic proteins.. The chain is Signal peptidase I (lepB) from Rickettsia conorii (strain ATCC VR-613 / Malish 7).